The chain runs to 292 residues: Ribosomal protein L11 methyltransferase (292 aa).

Thr-144, Gly-165, Asp-187, and Asn-229 together coordinate S-adenosyl-L-methionine.

The protein belongs to the methyltransferase superfamily. PrmA family.

The protein localises to the cytoplasm. The catalysed reaction is L-lysyl-[protein] + 3 S-adenosyl-L-methionine = N(6),N(6),N(6)-trimethyl-L-lysyl-[protein] + 3 S-adenosyl-L-homocysteine + 3 H(+). Functionally, methylates ribosomal protein L11. This chain is Ribosomal protein L11 methyltransferase, found in Pseudomonas putida (strain W619).